A 276-amino-acid chain; its full sequence is MKGQILREMKVQPAIEPEYEVQRRVAFIKSKLKESYTHTLVLGISGGVDSTLAGRLCQLAVDELNGESQQTDYQFIAVRLPYHIQKDEHEAQLACDFISPSKQVSVNIHDGVLGTHHNTLNGLEAAGVDLAQNVNIDFVKGNVKARMRMIVQYEIAGLTGGLVVGTDHSAENITGFYTKWGDGACDLAPLFGLNKRQVRLLADYLGAPELLVHKAPTADLECDKPQLEDEAALGVTYDQIDDFLEGKPVDSAVNDRLIGIYKATQHKRQPIPTIYD.

43 to 50 is a binding site for ATP; sequence GISGGVDS. Mg(2+) is bound at residue Asp-49. Arg-146 is a binding site for deamido-NAD(+). ATP is bound at residue Thr-166. Glu-171 is a binding site for Mg(2+). The deamido-NAD(+) site is built by Lys-179 and Asp-186. ATP-binding residues include Lys-195 and Thr-217. 266–267 is a deamido-NAD(+) binding site; the sequence is HK.

Belongs to the NAD synthetase family. Homodimer.

The catalysed reaction is deamido-NAD(+) + NH4(+) + ATP = AMP + diphosphate + NAD(+) + H(+). It functions in the pathway cofactor biosynthesis; NAD(+) biosynthesis; NAD(+) from deamido-NAD(+) (ammonia route): step 1/1. Functionally, catalyzes the ATP-dependent amidation of deamido-NAD to form NAD. Uses ammonia as a nitrogen source. The chain is NH(3)-dependent NAD(+) synthetase from Shewanella sediminis (strain HAW-EB3).